The sequence spans 74 residues: DNA gyrase inhibitor YacG (74 aa).

Zn(2+)-binding residues include cysteine 7, cysteine 10, cysteine 26, and cysteine 30.

The protein belongs to the DNA gyrase inhibitor YacG family. In terms of assembly, interacts with GyrB. Requires Zn(2+) as cofactor.

Its function is as follows. Inhibits all the catalytic activities of DNA gyrase by preventing its interaction with DNA. Acts by binding directly to the C-terminal domain of GyrB, which probably disrupts DNA binding by the gyrase. The chain is DNA gyrase inhibitor YacG from Shewanella denitrificans (strain OS217 / ATCC BAA-1090 / DSM 15013).